A 424-amino-acid polypeptide reads, in one-letter code: Probable ribonuclease FAU-1 (424 aa).

This sequence belongs to the FAU-1 family.

In terms of biological role, probable RNase involved in rRNA stability through maturation and/or degradation of precursor rRNAs. Binds to RNA in loop regions with AU-rich sequences. In Saccharolobus solfataricus (strain ATCC 35092 / DSM 1617 / JCM 11322 / P2) (Sulfolobus solfataricus), this protein is Probable ribonuclease FAU-1.